The sequence spans 104 residues: MEKRSFKEKLEIIRNIIRESLLGNAAIIALIYAASHSLPVNAFPDYLVISLLSIAAGIVVLWLFSIIYIYFCELFRSHWIAVWFIIWSSVINLIILYGFYDRFI.

In Escherichia coli (strain K12), this protein is Protein ArtA (artA).